The sequence spans 57 residues: Large ribosomal subunit protein bL32 (57 aa).

Belongs to the bacterial ribosomal protein bL32 family.

The chain is Large ribosomal subunit protein bL32 from Bacillus pumilus (strain SAFR-032).